Consider the following 356-residue polypeptide: L-Lys-D/L-Arg epimerase (356 aa).

Substrate-binding positions include T135 and 160 to 162 (KVK). Positions 190, 216, and 241 each coordinate Mg(2+). Substrate is bound by residues K266, D296, and 319-321 (DLD).

Belongs to the mandelate racemase/muconate lactonizing enzyme family. It depends on Mg(2+) as a cofactor.

Functionally, catalyzes the epimerization of L-Lys-L-Arg to L-Lys-D-Arg. Can also catalyze the epimerization of other cationic dipeptides, such as L-Arg-L-Arg, L-Lys-L-Lys and L-Lys-L-His, but with lower efficiency (in vitro). This is L-Lys-D/L-Arg epimerase from Methylococcus capsulatus (strain ATCC 33009 / NCIMB 11132 / Bath).